The chain runs to 558 residues: Urocanate hydratase (558 aa).

Residues 54–55 (GG), glutamine 132, 178–180 (GMG), glutamate 198, 244–245 (NA), 265–269 (QTSAH), 275–276 (YL), and tyrosine 324 each bind NAD(+). The active site involves cysteine 412. Residue glycine 494 participates in NAD(+) binding.

This sequence belongs to the urocanase family. NAD(+) serves as cofactor.

The protein localises to the cytoplasm. It catalyses the reaction 4-imidazolone-5-propanoate = trans-urocanate + H2O. Its pathway is amino-acid degradation; L-histidine degradation into L-glutamate; N-formimidoyl-L-glutamate from L-histidine: step 2/3. Its function is as follows. Catalyzes the conversion of urocanate to 4-imidazolone-5-propionate. In Acinetobacter baumannii (strain SDF), this protein is Urocanate hydratase.